The primary structure comprises 623 residues: Dictomallein-5 (623 aa).

Residues 1–21 form the signal peptide; the sequence is MKIFIIKIILVLFNYVLLSYS. The Peptidase M66 domain maps to 174 to 435; sequence PNVGQDYTLK…QNYFKNSIYY (262 aa). His-327 contributes to the Zn(2+) binding site. Glu-328 is an active-site residue. Residues His-331 and His-337 each contribute to the Zn(2+) site.

This sequence belongs to the dictomallein family. The cofactor is Zn(2+).

The protein resides in the secreted. This is Dictomallein-5 (dtmlE) from Dictyostelium discoideum (Social amoeba).